A 529-amino-acid polypeptide reads, in one-letter code: Glycylpeptide N-tetradecanoyltransferase 2 (529 aa).

A disordered region spans residues 1–82 (MAEDSESAAS…QEIKIQQSSK (82 aa)). The span at 15 to 32 (ELDDQDTCGIDGDNEEET) shows a compositional bias: acidic residues. Ser-38 is subject to Phosphoserine. Residues 46 to 57 (KKKKKKQKRKKE) show a composition bias toward basic residues. Positions 61–82 (SGGTKSDSASDSQEIKIQQSSK) are enriched in polar residues. Tetradecanoyl-CoA is bound by residues Trp-153, Leu-281, Val-283, Ser-289, Arg-291, Val-292, and Ala-293.

It belongs to the NMT family.

Its subcellular location is the cytoplasm. The protein resides in the membrane. It catalyses the reaction N-terminal glycyl-[protein] + tetradecanoyl-CoA = N-tetradecanoylglycyl-[protein] + CoA + H(+). The catalysed reaction is N-terminal glycyl-L-lysyl-[protein] + tetradecanoyl-CoA = N-terminal glycyl-(N(6)-tetradecanoyl)-L-lysyl-[protein] + CoA + H(+). In terms of biological role, adds a myristoyl group to the N-terminal glycine residue of certain cellular and viral proteins. Also able to mediate N-terminal lysine myristoylation of proteins: catalyzes myristoylation of ARF6 on both 'Gly-2' and 'Lys-3'. Lysine myristoylation is required to maintain ARF6 on membranes during the GTPase cycle. The chain is Glycylpeptide N-tetradecanoyltransferase 2 (Nmt2) from Mus musculus (Mouse).